A 369-amino-acid polypeptide reads, in one-letter code: Chorismate synthase (369 aa).

NADP(+) is bound by residues Arg48 and Arg54. Residues 125-127 (RSS), 238-239 (NA), Gly278, 293-297 (KPTSS), and Arg319 each bind FMN.

Belongs to the chorismate synthase family. As to quaternary structure, homotetramer. FMNH2 is required as a cofactor.

The enzyme catalyses 5-O-(1-carboxyvinyl)-3-phosphoshikimate = chorismate + phosphate. The protein operates within metabolic intermediate biosynthesis; chorismate biosynthesis; chorismate from D-erythrose 4-phosphate and phosphoenolpyruvate: step 7/7. In terms of biological role, catalyzes the anti-1,4-elimination of the C-3 phosphate and the C-6 proR hydrogen from 5-enolpyruvylshikimate-3-phosphate (EPSP) to yield chorismate, which is the branch point compound that serves as the starting substrate for the three terminal pathways of aromatic amino acid biosynthesis. This reaction introduces a second double bond into the aromatic ring system. This is Chorismate synthase from Burkholderia mallei (strain NCTC 10229).